Consider the following 129-residue polypeptide: Protein Turandot C (129 aa).

The signal sequence occupies residues Met-1–Gly-21.

This sequence belongs to the Turandot family.

It localises to the secreted. A humoral factor that may play a role in stress tolerance. This Drosophila sechellia (Fruit fly) protein is Protein Turandot C.